Reading from the N-terminus, the 215-residue chain is 3-demethoxyubiquinol 3-hydroxylase (215 aa).

Positions 64, 94, 97, 146, 178, and 181 each coordinate Fe cation.

The protein belongs to the COQ7 family. The cofactor is Fe cation.

It is found in the cell membrane. The catalysed reaction is a 5-methoxy-2-methyl-3-(all-trans-polyprenyl)benzene-1,4-diol + AH2 + O2 = a 3-demethylubiquinol + A + H2O. Its pathway is cofactor biosynthesis; ubiquinone biosynthesis. Catalyzes the hydroxylation of 2-nonaprenyl-3-methyl-6-methoxy-1,4-benzoquinol during ubiquinone biosynthesis. This Pseudomonas fluorescens (strain Pf0-1) protein is 3-demethoxyubiquinol 3-hydroxylase.